A 300-amino-acid chain; its full sequence is Solute carrier family 25 member 35 (300 aa).

Solcar repeat units lie at residues 1–90, 100–193, and 203–294; these read MDFL…AESR, HSPV…IKDL, and QSWK…LRSF. 6 helical membrane-spanning segments follow: residues 38 to 58, 59 to 79, 91 to 119, 169 to 190, 205 to 225, and 277 to 300; these read TYQRHYRNVFHAFFTIGKVDG, LAALQKGLGPALLYQFLMNGI, GYLHTNEGTHSPVRSAAAGALAGVMGAYL, AVGGLPRVVIGSSTQLCTFSSI, WKVALAAAMVSGVAIVVAMTP, and LGPHTILSLFFWDQLRSFYNTYAK.

This sequence belongs to the mitochondrial carrier (TC 2.A.29) family.

Its subcellular location is the mitochondrion inner membrane. The catalysed reaction is a dicarboxylate(in) + sulfate(out) = a dicarboxylate(out) + sulfate(in). Its function is as follows. Putative antiporter that exchanges dicarboxylates and sulfur oxoanions across the inner membrane of mitochondria. In Mus musculus (Mouse), this protein is Solute carrier family 25 member 35 (Slc25a35).